The following is a 470-amino-acid chain: Isocitrate dehydrogenase (NAD(+)), mitochondrial (470 aa).

The N-terminal 26 residues, 1 to 26, are a transit peptide targeting the mitochondrion; sequence MTRVERGRVLARAIERAVAHRASARR. Residues 138–140 and Asn159 each bind NAD(+); that span reads TVT. D-threo-isocitrate-binding positions include 157–163, Arg193, Tyr200, Lys275, and Asp319; that span reads SPNGAMR. A Mg(2+)-binding site is contributed by Asp319. Residue Lys324 participates in NAD(+) binding. Asp343 contacts D-threo-isocitrate. Mg(2+) contacts are provided by Asp343 and Asp347. Residues 380-385 and Asn399 contribute to the NAD(+) site; that span reads HGTVAD.

It belongs to the isocitrate and isopropylmalate dehydrogenases family. Forms homodimers. The cofactor is Mg(2+). Requires Mn(2+) as cofactor.

The protein resides in the mitochondrion. It carries out the reaction D-threo-isocitrate + NAD(+) = 2-oxoglutarate + CO2 + NADH. Its activity is regulated as follows. The homodimer exhibits allosteric regulation by isocitrate. Functionally, performs an essential role in the oxidative function of the tricarboxylic acid cycle and respiration. Catalyzes the decarboxylation of isocitrate to produce 2-oxoglutarate and generate NADH to provide electrons for energy production. The polypeptide is Isocitrate dehydrogenase (NAD(+)), mitochondrial (Ostreococcus tauri).